The following is a 491-amino-acid chain: NADH-ubiquinone oxidoreductase chain 4 (491 aa).

14 helical membrane-spanning segments follow: residues 2-22, 37-57, 89-109, 114-134, 139-159, 169-189, 215-235, 245-265, 271-291, 308-328, 332-352, 372-392, 412-432, and 457-477; these read IFHK…IINV, ALEW…AFDM, ISLF…LISW, FLLK…MGVF, LLLF…LIGV, ASYY…LGIF, WIFA…PFHI, PVSG…YGFL, ILPA…VIAI, IAYS…THTI, VAAV…FIAV, FSMP…MAIP, IVIG…SLYL, and IAIS…SLII.

Belongs to the complex I subunit 4 family.

It is found in the mitochondrion membrane. The enzyme catalyses a ubiquinone + NADH + 5 H(+)(in) = a ubiquinol + NAD(+) + 4 H(+)(out). Its function is as follows. Core subunit of the mitochondrial membrane respiratory chain NADH dehydrogenase (Complex I) that is believed to belong to the minimal assembly required for catalysis. Complex I functions in the transfer of electrons from NADH to the respiratory chain. The immediate electron acceptor for the enzyme is believed to be ubiquinone. This chain is NADH-ubiquinone oxidoreductase chain 4 (ND4), found in Metridium senile (Brown sea anemone).